Here is a 139-residue protein sequence, read N- to C-terminus: Small ribosomal subunit protein uS12 (139 aa).

Asp-102 carries the 3-methylthioaspartic acid modification.

It belongs to the universal ribosomal protein uS12 family. In terms of assembly, part of the 30S ribosomal subunit. Contacts proteins S8 and S17. May interact with IF1 in the 30S initiation complex.

With S4 and S5 plays an important role in translational accuracy. In terms of biological role, interacts with and stabilizes bases of the 16S rRNA that are involved in tRNA selection in the A site and with the mRNA backbone. Located at the interface of the 30S and 50S subunits, it traverses the body of the 30S subunit contacting proteins on the other side and probably holding the rRNA structure together. The combined cluster of proteins S8, S12 and S17 appears to hold together the shoulder and platform of the 30S subunit. In Bacillus pumilus (strain SAFR-032), this protein is Small ribosomal subunit protein uS12.